The following is a 233-amino-acid chain: Ribonuclease 3 (233 aa).

The 123-residue stretch at 4–126 (LNKLMERLGH…IVGAIYIDAG (123 aa)) folds into the RNase III domain. Glu-39 serves as a coordination point for Mg(2+). Asp-43 is an active-site residue. The Mg(2+) site is built by Asp-112 and Glu-115. Glu-115 is an active-site residue. Positions 153 to 222 (DAKSLLQEWL…AKRFLELLDD (70 aa)) constitute a DRBM domain.

This sequence belongs to the ribonuclease III family. In terms of assembly, homodimer. It depends on Mg(2+) as a cofactor.

The protein resides in the cytoplasm. It carries out the reaction Endonucleolytic cleavage to 5'-phosphomonoester.. Digests double-stranded RNA. Involved in the processing of primary rRNA transcript to yield the immediate precursors to the large and small rRNAs (23S and 16S). Processes some mRNAs, and tRNAs when they are encoded in the rRNA operon. Processes pre-crRNA and tracrRNA of type II CRISPR loci if present in the organism. This is Ribonuclease 3 from Coxiella burnetii (strain CbuK_Q154) (Coxiella burnetii (strain Q154)).